Here is a 271-residue protein sequence, read N- to C-terminus: PH domain-containing protein ECU06_0670 (271 aa).

A disordered region spans residues 26–145; sequence AKKTLDSSES…EKKNDAFIPP (120 aa). 3 stretches are compositionally biased toward basic and acidic residues: residues 42–64, 92–120, and 128–140; these read EVGEVDEVKGMETDAEKKDEPAM, QPEKQEAADGEDSSKKESPREEQTPLLDK, and EENAKPSSEKKND. Positions 166-267 constitute a PH domain; the sequence is NTVVEGWMWK…WVEKLNETIR (102 aa).

This Encephalitozoon cuniculi (strain GB-M1) (Microsporidian parasite) protein is PH domain-containing protein ECU06_0670.